A 530-amino-acid polypeptide reads, in one-letter code: Ubiquitin carboxyl-terminal hydrolase 17-like protein 17 (530 aa).

The USP domain maps to 80–375 (AGLQNMGNTC…QAYVLFYIQK (296 aa)). Cys89 functions as the Nucleophile in the catalytic mechanism. Residue His334 is the Proton acceptor of the active site. 2 stretches are compositionally biased toward basic and acidic residues: residues 382–392 (SESVSRGREPR) and 398–411 (DTDR…LKRD). Disordered stretches follow at residues 382-411 (SESV…LKRD) and 477-530 (NHHP…LVCQ). The span at 493 to 505 (TPTHQESMNTGTL) shows a compositional bias: polar residues. Residues 510 to 524 (GRARRSKGKNKHSKR) are compositionally biased toward basic residues.

It belongs to the peptidase C19 family. USP17 subfamily.

It localises to the nucleus. The protein localises to the endoplasmic reticulum. The enzyme catalyses Thiol-dependent hydrolysis of ester, thioester, amide, peptide and isopeptide bonds formed by the C-terminal Gly of ubiquitin (a 76-residue protein attached to proteins as an intracellular targeting signal).. Its function is as follows. Deubiquitinating enzyme that removes conjugated ubiquitin from specific proteins to regulate different cellular processes that may include cell proliferation, progression through the cell cycle, apoptosis, cell migration, and the cellular response to viral infection. This is Ubiquitin carboxyl-terminal hydrolase 17-like protein 17 (USP17L17) from Homo sapiens (Human).